The sequence spans 104 residues: Naphthalene 1,2-dioxygenase/salicylate 5-hydroxylase systems, ferredoxin component (104 aa).

Residues Ile6–Leu101 form the Rieske domain. 4 residues coordinate [2Fe-2S] cluster: Cys45, His47, Cys64, and His67.

Belongs to the bacterial ring-hydroxylating dioxygenase ferredoxin component family. In terms of assembly, ferredoxin NagAb belongs to both the salicylate 5-hydroxylase (S5H) and the naphthalene 1,2-dioxygenase (NDO) multicomponent enzyme systems. The NDO multicomponent enzyme system is composed of an electron transfer component and a dioxygenase component (iron sulfur protein (ISP)). The electron transfer component is composed of a ferredoxin reductase (NagAa) and a ferredoxin (NagAb), and the dioxygenase component is formed by a large alpha subunit (NagAc) and a small beta subunit (NagAd). The S5H multicomponent enzyme system is composed of an electron transfer component and a monooxygenase component. The electron transfer component is composed of a ferredoxin reductase (NagAa) and a ferredoxin (NagAb), and the monooxygenase component is formed by a large subunit (NagG) and a small subunit (NagH). [2Fe-2S] cluster is required as a cofactor.

It functions in the pathway aromatic compound metabolism; naphthalene degradation. In terms of biological role, component of two multicomponent enzyme systems which are involved in the catabolism of naphthalene. Plays a role as an electron transfer component for both salicylate 5-hydroxylase (S5H) and naphthalene 1,2-dioxygenase (NDO) systems, by transferring electrons to the oxygenase components. The polypeptide is Naphthalene 1,2-dioxygenase/salicylate 5-hydroxylase systems, ferredoxin component (Ralstonia sp).